We begin with the raw amino-acid sequence, 305 residues long: Ornithine carbamoyltransferase (305 aa).

Residues 54–57, glutamine 81, arginine 105, and 132–135 each bind carbamoyl phosphate; these read STRT and HPCQ. L-ornithine contacts are provided by residues asparagine 163, aspartate 220, and 224 to 225; that span reads SM. Carbamoyl phosphate-binding positions include 260–261 and arginine 288; that span reads CL.

The protein belongs to the aspartate/ornithine carbamoyltransferase superfamily. OTCase family.

Its subcellular location is the cytoplasm. The catalysed reaction is carbamoyl phosphate + L-ornithine = L-citrulline + phosphate + H(+). The protein operates within amino-acid biosynthesis; L-arginine biosynthesis; L-arginine from L-ornithine and carbamoyl phosphate: step 1/3. Its function is as follows. Reversibly catalyzes the transfer of the carbamoyl group from carbamoyl phosphate (CP) to the N(epsilon) atom of ornithine (ORN) to produce L-citrulline. The chain is Ornithine carbamoyltransferase from Chromohalobacter salexigens (strain ATCC BAA-138 / DSM 3043 / CIP 106854 / NCIMB 13768 / 1H11).